A 195-amino-acid chain; its full sequence is Probable GTP-binding protein EngB (195 aa).

One can recognise an EngB-type G domain in the interval 24-195 (DWPEIALAGR…EAWEAILRYL (172 aa)). Residues 32–39 (GRSNVGKS), 59–63 (GKTQL), 77–80 (DVPG), 144–147 (TKAD), and 176–178 (FSS) each bind GTP. Mg(2+) contacts are provided by serine 39 and threonine 61.

Belongs to the TRAFAC class TrmE-Era-EngA-EngB-Septin-like GTPase superfamily. EngB GTPase family. Requires Mg(2+) as cofactor.

Functionally, necessary for normal cell division and for the maintenance of normal septation. The polypeptide is Probable GTP-binding protein EngB (Lactococcus lactis subsp. lactis (strain IL1403) (Streptococcus lactis)).